We begin with the raw amino-acid sequence, 1102 residues long: Carbamoyl phosphate synthase large chain (1102 aa).

The carboxyphosphate synthetic domain stretch occupies residues 1–402 (MPKRTDLKSV…ALQKALRSLE (402 aa)). ATP contacts are provided by R129, R169, G175, G176, E208, I210, E215, G241, V242, H243, Q285, and E299. The region spanning 133–328 (KGVVERCGAE…IAKIATKLSL (196 aa)) is the ATP-grasp 1 domain. 3 residues coordinate Mg(2+): Q285, E299, and N301. Q285, E299, and N301 together coordinate Mn(2+). The tract at residues 403 to 546 (QKGSQLDFSS…YHYSSYDEED (144 aa)) is oligomerization domain. The interval 547 to 950 (EVGLHAKPSV…AFAKSQAAAN (404 aa)) is carbamoyl phosphate synthetic domain. The 192-residue stretch at 677-868 (ARVLDEAGLT…MAKAAALIGT (192 aa)) folds into the ATP-grasp 2 domain. R713, R752, L754, E759, G784, I785, H786, S787, Q827, and E839 together coordinate ATP. Residues Q827, E839, and N841 each contribute to the Mg(2+) site. Mn(2+) contacts are provided by Q827, E839, and N841. Residues 951-1096 (NALPTEGKIF…QEHAANLSAA (146 aa)) enclose the MGS-like domain. The segment at 951–1102 (NALPTEGKIF…LSAAMEAANA (152 aa)) is allosteric domain.

Belongs to the CarB family. Composed of two chains; the small (or glutamine) chain promotes the hydrolysis of glutamine to ammonia, which is used by the large (or ammonia) chain to synthesize carbamoyl phosphate. Tetramer of heterodimers (alpha,beta)4. The cofactor is Mg(2+). Requires Mn(2+) as cofactor.

The enzyme catalyses hydrogencarbonate + L-glutamine + 2 ATP + H2O = carbamoyl phosphate + L-glutamate + 2 ADP + phosphate + 2 H(+). The catalysed reaction is hydrogencarbonate + NH4(+) + 2 ATP = carbamoyl phosphate + 2 ADP + phosphate + 2 H(+). Its pathway is amino-acid biosynthesis; L-arginine biosynthesis; carbamoyl phosphate from bicarbonate: step 1/1. It participates in pyrimidine metabolism; UMP biosynthesis via de novo pathway; (S)-dihydroorotate from bicarbonate: step 1/3. Its function is as follows. Large subunit of the glutamine-dependent carbamoyl phosphate synthetase (CPSase). CPSase catalyzes the formation of carbamoyl phosphate from the ammonia moiety of glutamine, carbonate, and phosphate donated by ATP, constituting the first step of 2 biosynthetic pathways, one leading to arginine and/or urea and the other to pyrimidine nucleotides. The large subunit (synthetase) binds the substrates ammonia (free or transferred from glutamine from the small subunit), hydrogencarbonate and ATP and carries out an ATP-coupled ligase reaction, activating hydrogencarbonate by forming carboxy phosphate which reacts with ammonia to form carbamoyl phosphate. The chain is Carbamoyl phosphate synthase large chain from Paenarthrobacter aurescens (strain TC1).